The sequence spans 212 residues: tRNA(Phe) 7-((3-amino-3-carboxypropyl)-4-demethylwyosine(37)-N(4))-methyltransferase 2 (212 aa).

Belongs to the TYW3 family.

The catalysed reaction is 4-demethyl-7-[(3S)-3-amino-3-carboxypropyl]wyosine(37) in tRNA(Phe) + S-adenosyl-L-methionine = 7-[(3S)-3-amino-3-carboxypropyl]wyosine(37) in tRNA(Phe) + S-adenosyl-L-homocysteine + H(+). Its function is as follows. S-adenosyl-L-methionine-dependent methyltransferase that acts as a component of the wyosine derivatives biosynthesis pathway. Probably methylates N-4 position of wybutosine-86 to produce wybutosine-72. In Thermococcus kodakarensis (strain ATCC BAA-918 / JCM 12380 / KOD1) (Pyrococcus kodakaraensis (strain KOD1)), this protein is tRNA(Phe) 7-((3-amino-3-carboxypropyl)-4-demethylwyosine(37)-N(4))-methyltransferase 2.